Consider the following 238-residue polypeptide: Glycerol-3-phosphate acyltransferase (238 aa).

6 helical membrane passes run 5 to 25 (VIFGSNILLILVAYFIGSINF), 61 to 81 (FLVFFLDVSKSFWFAIISAIL), 88 to 108 (FGAVITQLVVLFVIIGHVFPI), 125 to 145 (IASLNIILAIIGGIIFFAMIF), 149 to 169 (IVSLGSFITPFILVIFMIIPW), and 194 to 214 (AWYLSSLFLFLAALIILFTHI).

Belongs to the PlsY family. Probably interacts with PlsX.

It localises to the cell membrane. It carries out the reaction an acyl phosphate + sn-glycerol 3-phosphate = a 1-acyl-sn-glycero-3-phosphate + phosphate. The protein operates within lipid metabolism; phospholipid metabolism. Its function is as follows. Catalyzes the transfer of an acyl group from acyl-phosphate (acyl-PO(4)) to glycerol-3-phosphate (G3P) to form lysophosphatidic acid (LPA). This enzyme utilizes acyl-phosphate as fatty acyl donor, but not acyl-CoA or acyl-ACP. This is Glycerol-3-phosphate acyltransferase from Mycoplasma mobile (strain ATCC 43663 / 163K / NCTC 11711) (Mesomycoplasma mobile).